Consider the following 402-residue polypeptide: Flavohemoprotein (402 aa).

The region spanning 1 to 136 is the Globin domain; that stretch reads MLSEKTIEIV…IADAFISIEA (136 aa). Residue His-85 participates in heme b binding. Catalysis depends on charge relay system residues Tyr-95 and Glu-135. The reductase stretch occupies residues 147–402; the sequence is GGWKDFRNFV…EFFGPAASLQ (256 aa). Residues 150 to 260 enclose the FAD-binding FR-type domain; it reads KDFRNFVVVK…SAPAGDFVLN (111 aa). Residues Tyr-188 and 204–207 contribute to the FAD site; that span reads RQYS. 273-278 is a binding site for NADP(+); that stretch reads GVGITP. Residue 394 to 397 participates in FAD binding; that stretch reads FFGP.

It belongs to the globin family. Two-domain flavohemoproteins subfamily. The protein in the C-terminal section; belongs to the flavoprotein pyridine nucleotide cytochrome reductase family. The cofactor is heme b. FAD serves as cofactor.

It carries out the reaction 2 nitric oxide + NADPH + 2 O2 = 2 nitrate + NADP(+) + H(+). The catalysed reaction is 2 nitric oxide + NADH + 2 O2 = 2 nitrate + NAD(+) + H(+). Is involved in NO detoxification in an aerobic process, termed nitric oxide dioxygenase (NOD) reaction that utilizes O(2) and NAD(P)H to convert NO to nitrate, which protects the bacterium from various noxious nitrogen compounds. Therefore, plays a central role in the inducible response to nitrosative stress. The protein is Flavohemoprotein of Bacillus thuringiensis subsp. konkukian (strain 97-27).